Reading from the N-terminus, the 897-residue chain is Protein translocase subunit SecA (897 aa).

ATP-binding positions include glutamine 89, 107 to 111 (GEGKT), and aspartate 517. The segment covering 839–856 (DDAQATHSNPNEQTKQAS) has biased composition (polar residues). The segment at 839–897 (DDAQATHSNPNEQTKQASITNNIQTQTDQQNTYQRKEKKVGRNEPCPCGSGKKYKKCHG) is disordered. Residues 857 to 870 (ITNNIQTQTDQQNT) are compositionally biased toward low complexity. Residues cysteine 884, cysteine 886, cysteine 895, and histidine 896 each coordinate Zn(2+).

The protein belongs to the SecA family. Monomer and homodimer. Part of the essential Sec protein translocation apparatus which comprises SecA, SecYEG and auxiliary proteins SecDF-YajC and YidC. It depends on Zn(2+) as a cofactor.

The protein localises to the cell inner membrane. It localises to the cytoplasm. The catalysed reaction is ATP + H2O + cellular proteinSide 1 = ADP + phosphate + cellular proteinSide 2.. Its function is as follows. Part of the Sec protein translocase complex. Interacts with the SecYEG preprotein conducting channel. Has a central role in coupling the hydrolysis of ATP to the transfer of proteins into and across the cell membrane, serving as an ATP-driven molecular motor driving the stepwise translocation of polypeptide chains across the membrane. The polypeptide is Protein translocase subunit SecA (Vesicomyosocius okutanii subsp. Calyptogena okutanii (strain HA)).